The primary structure comprises 83 residues: CDC42 small effector protein 2 (83 aa).

Residues Cys10 and Cys11 are each lipidated (S-palmitoyl cysteine). The region spanning 28 to 41 (IGEPTNFVHTAHVG) is the CRIB domain. Phosphoserine is present on residues Ser42 and Ser51.

Belongs to the CDC42SE/SPEC family. Interacts with CDC42 (in GTP-bound form). Interacts weakly with RAC1 and not at all with RHOA.

It is found in the cytoplasm. The protein localises to the cytoskeleton. Its subcellular location is the cell membrane. The protein resides in the cell projection. It localises to the phagocytic cup. Probably involved in the organization of the actin cytoskeleton by acting downstream of CDC42, inducing actin filament assembly. Alters CDC42-induced cell shape changes. In activated T-cells, may play a role in CDC42-mediated F-actin accumulation at the immunological synapse. May play a role in early contractile events in phagocytosis in macrophages. In Rattus norvegicus (Rat), this protein is CDC42 small effector protein 2 (Cdc42se2).